The primary structure comprises 372 residues: L-lysine 4-hydroxylase (372 aa).

3 residues coordinate Fe cation: histidine 176, glutamate 178, and histidine 312.

This sequence belongs to the clavaminate synthase family. Fe(2+) is required as a cofactor.

It catalyses the reaction L-lysine + 2-oxoglutarate + O2 = (4R)-4-hydroxy-L-lysine + succinate + CO2. Alpha-ketoglutarate-dependent dioxygenase that in vitro catalyzes the regio- and stereoselective hydroxylation of L-lysine, leading to (4R)-4-hydroxy-L-lysine. The protein is L-lysine 4-hydroxylase of Flavobacterium sp. (strain CF136).